Here is a 302-residue protein sequence, read N- to C-terminus: Haloalkane dehalogenase (302 aa).

One can recognise an AB hydrolase-1 domain in the interval 48–150; that stretch reads PVLLMHGEPS…AGLVIANTGL (103 aa). The active-site Nucleophile is Asp-123. Catalysis depends on Asp-249, which acts as the Proton donor. His-278 acts as the Proton acceptor in catalysis.

The protein belongs to the haloalkane dehalogenase family. Type 1 subfamily. In terms of assembly, monomer.

It catalyses the reaction 1-haloalkane + H2O = a halide anion + a primary alcohol + H(+). Its function is as follows. Catalyzes hydrolytic cleavage of carbon-halogen bonds in halogenated aliphatic compounds, leading to the formation of the corresponding primary alcohols, halide ions and protons. This Caulobacter sp. (strain K31) protein is Haloalkane dehalogenase.